A 259-amino-acid chain; its full sequence is 3-methyl-2-oxobutanoate hydroxymethyltransferase (259 aa).

Asp-44 and Asp-83 together coordinate Mg(2+). 3-methyl-2-oxobutanoate-binding positions include 44-45 (DS), Asp-83, and Lys-112. Mg(2+) is bound at residue Glu-114. Glu-177 (proton acceptor) is an active-site residue.

Belongs to the PanB family. In terms of assembly, homodecamer; pentamer of dimers. The cofactor is Mg(2+).

It is found in the cytoplasm. It catalyses the reaction 3-methyl-2-oxobutanoate + (6R)-5,10-methylene-5,6,7,8-tetrahydrofolate + H2O = 2-dehydropantoate + (6S)-5,6,7,8-tetrahydrofolate. Its pathway is cofactor biosynthesis; (R)-pantothenate biosynthesis; (R)-pantoate from 3-methyl-2-oxobutanoate: step 1/2. Functionally, catalyzes the reversible reaction in which hydroxymethyl group from 5,10-methylenetetrahydrofolate is transferred onto alpha-ketoisovalerate to form ketopantoate. In Nitratiruptor sp. (strain SB155-2), this protein is 3-methyl-2-oxobutanoate hydroxymethyltransferase.